Reading from the N-terminus, the 374-residue chain is 5-hydroxytryptamine receptor 1D (374 aa).

N-linked (GlcNAc...) asparagine glycans are attached at residues N5, N17, and N21. A run of 3 helical transmembrane segments spans residues 36-61 (ISLV…TTIL), 73-94 (LIGS…ISIA), and 107-131 (LCDI…VIAL). An intrachain disulfide couples C108 to C185. Residues D115 and C119 each contribute to the serotonin site. The short motif at 132-134 (DRY) is the DRY motif; important for ligand-induced conformation changes element. Transmembrane regions (helical) follow at residues 152-173 (AAAM…PLFW), 192-215 (ISYT…ILYG), 298-323 (KTLG…VLPI), and 333-356 (ALFD…YTVF). Serotonin is bound at residue S318. The short motif at 349–353 (NPVIY) is the NPxxY motif; important for ligand-induced conformation changes and signaling element.

This sequence belongs to the G-protein coupled receptor 1 family. Homodimer. Heterodimer with HTR1B. In terms of tissue distribution, detected in dorsal raphe.

The protein localises to the cell membrane. Functionally, G-protein coupled receptor for 5-hydroxytryptamine (serotonin). Also functions as a receptor for ergot alkaloid derivatives, various anxiolytic and antidepressant drugs and other psychoactive substances. Ligand binding causes a conformation change that triggers signaling via guanine nucleotide-binding proteins (G proteins) and modulates the activity of downstream effectors, such as adenylate cyclase. HTR1D is coupled to G(i)/G(o) G alpha proteins and mediates inhibitory neurotransmission by inhibiting adenylate cyclase activity. Regulates the release of 5-hydroxytryptamine in the brain, and thereby affects neural activity. May also play a role in regulating the release of other neurotransmitters. May play a role in vasoconstriction. This Rattus norvegicus (Rat) protein is 5-hydroxytryptamine receptor 1D (Htr1d).